The sequence spans 440 residues: Methionine aminopeptidase 2-2 (440 aa).

Residues 1–102 form a disordered region; it reads MAAQVPTEAL…KGQEEEYRDE (102 aa). A compositionally biased stretch (acidic residues) spans 36–46; it reads DSDDSDEEGEE. Over residues 56 to 70 the composition is skewed to basic residues; the sequence is AKKKKKNKKKKKKKS. His194 contacts substrate. 3 residues coordinate a divalent metal cation: Asp214, Asp225, and His294. Residue His302 participates in substrate binding. A divalent metal cation-binding residues include Glu327 and Glu421.

Belongs to the peptidase M24A family. Methionine aminopeptidase eukaryotic type 2 subfamily. Requires Co(2+) as cofactor. Zn(2+) is required as a cofactor. It depends on Mn(2+) as a cofactor. The cofactor is Fe(2+).

It is found in the cytoplasm. It carries out the reaction Release of N-terminal amino acids, preferentially methionine, from peptides and arylamides.. Its function is as follows. Cotranslationally removes the N-terminal methionine from nascent proteins. The N-terminal methionine is often cleaved when the second residue in the primary sequence is small and uncharged (Met-Ala-, Cys, Gly, Pro, Ser, Thr, or Val). In Colletotrichum graminicola (strain M1.001 / M2 / FGSC 10212) (Maize anthracnose fungus), this protein is Methionine aminopeptidase 2-2.